A 547-amino-acid chain; its full sequence is Nuclear speckle splicing regulatory protein 1 (547 aa).

Residues 25-51 (KPSVFGNDSDDDEASVSESLQREAAKK) form a disordered region. Residues Ser27 and Ser33 each carry the phosphoserine modification. Residues 103–177 (IHNLLKAVEI…EARLDVTKQK (75 aa)) are a coiled coil. The tract at residues 105 to 169 (NLLKAVEIRK…REKRAAALEA (65 aa)) is necessary for alternative splicing activity. The tract at residues 188-523 (NQAVGEEAVP…KRSNEETVMS (336 aa)) is disordered. Glycyl lysine isopeptide (Lys-Gly) (interchain with G-Cter in SUMO2) cross-links involve residues Lys198 and Lys209. A compositionally biased stretch (basic and acidic residues) spans 200–217 (SFREARTVIKEEKLRGYP). The segment covering 223 to 232 (ENRPQQNCAL) has biased composition (polar residues). A compositionally biased stretch (acidic residues) spans 237 to 254 (EEAEENPDADSDSEESCD). Phosphoserine is present on residues Ser247 and Ser252. The segment covering 255-269 (DGERGDHKVKSRGEE) has biased composition (basic and acidic residues). N6-acetyllysine is present on Lys276. Over residues 277–287 (YLKHHKNHTHS) the composition is skewed to basic residues. Residue Lys279 forms a Glycyl lysine isopeptide (Lys-Gly) (interchain with G-Cter in SUMO2) linkage. The span at 308-339 (RGHEHKGGQHQDRQSRDQESCHKDRSHREEKS) shows a compositional bias: basic and acidic residues. Basic residues predominate over residues 340–355 (SHRHREASHKDHHWKR). Basic and acidic residues-rich tracts occupy residues 356–480 (HEHE…KPPR) and 490–506 (RLTEERPEKGSQPERPP). The stretch at 376 to 417 (KREKYSSREQEKDRQWNDHDRYSEKEKKGKEKEEHRKARRER) forms a coiled coil. A Phosphoserine modification is found at Ser447.

The protein belongs to the NSRP1 family. Interacts (via C-terminus) with SRSF1. Interacts (via C-terminus) with SRSF2.

The protein resides in the nucleus. It is found in the nucleus speckle. Functionally, RNA-binding protein that mediates pre-mRNA alternative splicing regulation. This is Nuclear speckle splicing regulatory protein 1 (Nsrp1) from Rattus norvegicus (Rat).